Consider the following 267-residue polypeptide: Glutamate 5-kinase (267 aa).

Residue K14 participates in ATP binding. The substrate site is built by S54, D141, and N157. ATP is bound by residues 177–178 (SD) and 219–225 (TGGMMSK).

The protein belongs to the glutamate 5-kinase family.

It is found in the cytoplasm. It carries out the reaction L-glutamate + ATP = L-glutamyl 5-phosphate + ADP. It participates in amino-acid biosynthesis; L-proline biosynthesis; L-glutamate 5-semialdehyde from L-glutamate: step 1/2. Its function is as follows. Catalyzes the transfer of a phosphate group to glutamate to form L-glutamate 5-phosphate. This chain is Glutamate 5-kinase, found in Streptococcus thermophilus.